Consider the following 276-residue polypeptide: NADPH-dependent 7-cyano-7-deazaguanine reductase (276 aa).

Position 83-85 (83-85 (IES)) interacts with substrate. An NADPH-binding site is contributed by 85–86 (SK). Residue C184 is the Thioimide intermediate of the active site. The Proton donor role is filled by D191. 223-224 (HE) is a substrate binding site. 252–253 (RG) contacts NADPH.

The protein belongs to the GTP cyclohydrolase I family. QueF type 2 subfamily. In terms of assembly, homodimer.

Its subcellular location is the cytoplasm. It catalyses the reaction 7-aminomethyl-7-carbaguanine + 2 NADP(+) = 7-cyano-7-deazaguanine + 2 NADPH + 3 H(+). The protein operates within tRNA modification; tRNA-queuosine biosynthesis. Its function is as follows. Catalyzes the NADPH-dependent reduction of 7-cyano-7-deazaguanine (preQ0) to 7-aminomethyl-7-deazaguanine (preQ1). In Pseudomonas fluorescens (strain Pf0-1), this protein is NADPH-dependent 7-cyano-7-deazaguanine reductase.